The sequence spans 426 residues: Protein arginine methyltransferase NDUFAF7 homolog, mitochondrial (426 aa).

The protein belongs to the NDUFAF7 family.

The protein localises to the mitochondrion. The enzyme catalyses L-arginyl-[protein] + 2 S-adenosyl-L-methionine = N(omega),N(omega)'-dimethyl-L-arginyl-[protein] + 2 S-adenosyl-L-homocysteine + 2 H(+). Arginine methyltransferase involved in the assembly or stability of mitochondrial NADH:ubiquinone oxidoreductase complex (complex I). The protein is Protein arginine methyltransferase NDUFAF7 homolog, mitochondrial of Caenorhabditis elegans.